Reading from the N-terminus, the 384-residue chain is S-adenosylmethionine synthase (384 aa).

H15 is a binding site for ATP. D17 is a binding site for Mg(2+). Residue E43 participates in K(+) binding. Residues E56 and Q99 each contribute to the L-methionine site. The tract at residues 99–109 (QSPDINQGVDR) is flexible loop. Residues 164 to 166 (DAK), 230 to 231 (RF), D239, 245 to 246 (RK), A262, and K266 contribute to the ATP site. D239 is an L-methionine binding site. K270 contributes to the L-methionine binding site.

This sequence belongs to the AdoMet synthase family. Homotetramer; dimer of dimers. Mg(2+) is required as a cofactor. The cofactor is K(+).

The protein resides in the cytoplasm. It carries out the reaction L-methionine + ATP + H2O = S-adenosyl-L-methionine + phosphate + diphosphate. The protein operates within amino-acid biosynthesis; S-adenosyl-L-methionine biosynthesis; S-adenosyl-L-methionine from L-methionine: step 1/1. In terms of biological role, catalyzes the formation of S-adenosylmethionine (AdoMet) from methionine and ATP. The overall synthetic reaction is composed of two sequential steps, AdoMet formation and the subsequent tripolyphosphate hydrolysis which occurs prior to release of AdoMet from the enzyme. In Enterobacter sp. (strain 638), this protein is S-adenosylmethionine synthase.